The chain runs to 943 residues: UvrABC system protein A (943 aa).

31–38 serves as a coordination point for ATP; the sequence is GLSGSGKS. Residues 253–280 form a C4-type zinc finger; sequence CPHCGYSVPELEPRLFSFNNPAGACPTC. 2 ABC transporter domains span residues 310–587 and 607–937; these read WDRR…PNSI and LDKK…RFLK. ATP is bound at residue 640 to 647; the sequence is GVSGSGKS. Residues 740–766 form a C4-type zinc finger; the sequence is CEACQGDGVLKVEMHFLPDVYVPCDQC.

It belongs to the ABC transporter superfamily. UvrA family. As to quaternary structure, forms a heterotetramer with UvrB during the search for lesions.

Its subcellular location is the cytoplasm. Its function is as follows. The UvrABC repair system catalyzes the recognition and processing of DNA lesions. UvrA is an ATPase and a DNA-binding protein. A damage recognition complex composed of 2 UvrA and 2 UvrB subunits scans DNA for abnormalities. When the presence of a lesion has been verified by UvrB, the UvrA molecules dissociate. This chain is UvrABC system protein A, found in Haemophilus influenzae (strain ATCC 51907 / DSM 11121 / KW20 / Rd).